The primary structure comprises 380 residues: Cytochrome b (380 aa).

4 helical membrane passes run 34-54 (FGSL…LLAM), 78-99 (WLIR…YLHI), 114-134 (WNTG…GYVL), and 179-199 (FFAL…IHLT). Heme b is bound by residues His-84 and His-98. Heme b contacts are provided by His-183 and His-197. His-202 is an a ubiquinone binding site. 4 helical membrane-spanning segments follow: residues 227-247 (LKDA…ALFS), 289-309 (LGGV…PLLH), 321-341 (LSQL…WIGS), and 348-368 (FIII…ILFP).

Belongs to the cytochrome b family. The cytochrome bc1 complex contains 11 subunits: 3 respiratory subunits (MT-CYB, CYC1 and UQCRFS1), 2 core proteins (UQCRC1 and UQCRC2) and 6 low-molecular weight proteins (UQCRH/QCR6, UQCRB/QCR7, UQCRQ/QCR8, UQCR10/QCR9, UQCR11/QCR10 and a cleavage product of UQCRFS1). This cytochrome bc1 complex then forms a dimer. The cofactor is heme b.

The protein localises to the mitochondrion inner membrane. In terms of biological role, component of the ubiquinol-cytochrome c reductase complex (complex III or cytochrome b-c1 complex) that is part of the mitochondrial respiratory chain. The b-c1 complex mediates electron transfer from ubiquinol to cytochrome c. Contributes to the generation of a proton gradient across the mitochondrial membrane that is then used for ATP synthesis. This is Cytochrome b (MT-CYB) from Oceanodroma tethys (Wedge-rumped storm-petrel).